We begin with the raw amino-acid sequence, 126 residues long: Large ribosomal subunit protein uL22 (126 aa).

Belongs to the universal ribosomal protein uL22 family. In terms of assembly, part of the 50S ribosomal subunit.

This protein binds specifically to 23S rRNA; its binding is stimulated by other ribosomal proteins, e.g. L4, L17, and L20. It is important during the early stages of 50S assembly. It makes multiple contacts with different domains of the 23S rRNA in the assembled 50S subunit and ribosome. Functionally, the globular domain of the protein is located near the polypeptide exit tunnel on the outside of the subunit, while an extended beta-hairpin is found that lines the wall of the exit tunnel in the center of the 70S ribosome. This is Large ribosomal subunit protein uL22 from Ruegeria sp. (strain TM1040) (Silicibacter sp.).